The primary structure comprises 442 residues: Syndecan-3 (442 aa).

2 disordered regions span residues 1–25 and 47–80; these read MKPGPPRRGTAQGQRVDTATHAPGA and RWRNENFERPVDLEGSGDDDSFPDDELDDLYSGS. Positions 1 to 44 are cleaved as a signal peptide; sequence MKPGPPRRGTAQGQRVDTATHAPGARGLLLPPLLLLLLAGRAAG. At 45 to 387 the chain is on the extracellular side; sequence AQRWRNENFE…SILERKEVLV (343 aa). Residues 48-58 are compositionally biased toward basic and acidic residues; sequence WRNENFERPVD. Positions 61 to 75 are enriched in acidic residues; the sequence is GSGDDDSFPDDELDD. 4 O-linked (Xyl...) (glycosaminoglycan) serine glycosylation sites follow: Ser78, Ser80, Ser82, and Ser89. Thr107 carries O-linked (GalNAc) threonine; by GALNT13 glycosylation. 3 disordered regions span residues 152-199, 253-293, and 305-327; these read ESSQ…PATA, ATSR…AQTP, and EPEVPVSGGPSGDFELQEETTQP. 2 stretches are compositionally biased toward low complexity: residues 157–199 and 276–287; these read ATTI…PATA and TLPLGTTAPGPT. Residue Ser161 is glycosylated (O-linked (GalNAc) serine; by GALNT13). Residues Thr162, Thr163, Thr170, and Thr172 are each glycosylated (O-linked (GalNAc) threonine; by GALNT13). O-linked (Xyl...) (glycosaminoglycan) serine glycosylation is found at Ser315 and Ser367. Residues 388 to 408 form a helical membrane-spanning segment; sequence AVIVGGVVGALFAAFLVTLLI. A phosphotyrosine mark is found at Tyr409, Tyr419, Tyr431, and Tyr441. Residues 409–442 are Cytoplasmic-facing; sequence YRMKKKDEGSYTLEEPKQASVTYQKPDKQEEFYA. The interval 419–442 is disordered; that stretch reads YTLEEPKQASVTYQKPDKQEEFYA. Positions 433-442 are enriched in basic and acidic residues; it reads KPDKQEEFYA.

The protein belongs to the syndecan proteoglycan family. In terms of assembly, interacts with TIAM1. Interacts with PTN (via heparan sulfate chains); this interaction mediates the neurite outgrowth-promoting signal from PTN to the cytoskeleton of growing neurites; this interaction mediates osteoblast recruitment. Interacts with MDK; this interaction induces SDC3 clustering; this interaction induces neuronal cell adhesion and neurite outgrowth. Post-translationally, O-glycosylated within the Thr/Ser-rich region which could interact with lectin domains on other molecules.

The protein localises to the cell membrane. In terms of biological role, cell surface proteoglycan that may bear heparan sulfate. May have a role in the organization of cell shape by affecting the actin cytoskeleton, possibly by transferring signals from the cell surface in a sugar-dependent mechanism. The sequence is that of Syndecan-3 (Sdc3) from Mus musculus (Mouse).